The chain runs to 351 residues: 3-ketosteroid-9-alpha-monooxygenase, ferredoxin reductase component (351 aa).

An FAD-binding FR-type domain is found at 10 to 116 (SRSVILTVSA…LPPAGVFTPK (107 aa)). Positions 264–351 (ATVEVELDGE…PVTDHLKIEF (88 aa)) constitute a 2Fe-2S ferredoxin-type domain. Positions 300, 305, 308, and 338 each coordinate [2Fe-2S] cluster.

As to quaternary structure, the two-component system 3-ketosteroid-9-alpha-monooxygenase is composed of an oxygenase component KshA and a reductase component KshB. The cofactor is FAD. Requires [2Fe-2S] cluster as cofactor.

The catalysed reaction is androsta-1,4-diene-3,17-dione + 2 reduced [2Fe-2S]-[ferredoxin] + O2 + 2 H(+) = 9alpha-hydroxyandrosta-1,4-diene-3,17-dione + 2 oxidized [2Fe-2S]-[ferredoxin] + H2O. It functions in the pathway steroid metabolism; cholesterol degradation. With respect to regulation, KSH activity is completely inhibited by zinc ions. KshB is specifically inhibited by Cu(2+) ions. Functionally, probably involved in the degradation of cholesterol. In vitro, catalyzes the introduction of a 9alpha-hydroxyl moiety into the ring B of 3-ketosteroid substrates such as 1,4-androstadiene-3,17-dione (ADD), 4-androstene-3,17-dione (AD), 4-androstene-17beta-ol-3-one (testosterone), 4-pregnene-3,20-dione (progesterone), 19-nor-4-androstene-3,17-dione (nordion), 1-(5alpha)-androstene-3,17-dione, 5alpha-androstane-3,17-dione and 5beta-androstane-3,17-dione. KSH has the highest activity with 3-keto-Delta4 steroid substrates. In Rhodococcus rhodochrous, this protein is 3-ketosteroid-9-alpha-monooxygenase, ferredoxin reductase component.